Consider the following 543-residue polypeptide: Reticulophagy regulator 2 (543 aa).

The next 3 membrane-spanning stretches (helical) occupy residues 12-32 (AGGG…SLGM), 100-120 (SLRP…LDLW), and 204-224 (VPGI…PLVV). The span at 254–265 (LHHKHDKRKRQG) shows a compositional bias: basic residues. The disordered stretch occupies residues 254 to 287 (LHHKHDKRKRQGKNAPPGGDEPLAETESESEAEL). A compositionally biased stretch (acidic residues) spans 275–285 (PLAETESESEA). At threonine 279 the chain carries Phosphothreonine. Residues serine 281, serine 283, serine 291, and serine 311 each carry the phosphoserine modification. A Phosphothreonine modification is found at threonine 334. Disordered stretches follow at residues 336–394 (VSED…DVAA) and 411–486 (HFNG…EEEA). Phosphoserine is present on residues serine 337, serine 344, serine 347, and serine 385. Residues 461-480 (APSPSILPPVPQDSPQPLPA) are compositionally biased toward pro residues. An LIR motif motif is present at residues 490 to 495 (EDFELL). The interval 504-543 (NAELGLEPETPPKPPDAPPLGPDIHSLVQSDQEAQAVAEP) is disordered. Positions 512–524 (ETPPKPPDAPPLG) are enriched in pro residues.

The protein belongs to the RETREG family. Interacts with ATG8 family modifier proteins MAP1LC3A, MAP1LC3B, MAP1LC3C, GABARAP, GABARAPL1 and GABARAPL2. Shows higher affinity for GABARAPL1 than for MAP1LC3B. Interacts with CANX.

It is found in the endoplasmic reticulum membrane. In terms of biological role, endoplasmic reticulum (ER)-anchored autophagy regulator which exists in an inactive state under basal conditions but is activated following cellular stress. When activated, induces ER fragmentation and mediates ER delivery into lysosomes through sequestration into autophagosomes via interaction with ATG8 family proteins. Required for collagen quality control in a LIR motif-independent manner. In Homo sapiens (Human), this protein is Reticulophagy regulator 2.